Consider the following 631-residue polypeptide: Mu-like prophage FluMu protein gp42 (631 aa).

Helical transmembrane passes span 56–76 (LGNI…TMVG) and 385–405 (GLAD…PVYV). A disordered region spans residues 425–453 (IEDGRDKDKKTQKKNKPPRPKRGRGSVRS). The span at 434–449 (KTQKKNKPPRPKRGRG) shows a compositional bias: basic residues. Transmembrane regions (helical) follow at residues 455–475 (VAAV…VTTA), 495–515 (SKAV…TVLM), and 543–563 (ALIP…GWLG).

The protein to phage Mu protein gp42.

The protein localises to the cell membrane. The protein is Mu-like prophage FluMu protein gp42 of Haemophilus influenzae (strain ATCC 51907 / DSM 11121 / KW20 / Rd).